Here is a 198-residue protein sequence, read N- to C-terminus: Methyl-coenzyme M reductase I operon protein C (198 aa).

In terms of assembly, MCR is composed of three subunits: alpha, beta, and gamma. The function of proteins C and D is not known.

The polypeptide is Methyl-coenzyme M reductase I operon protein C (mcrC) (Methanothermobacter marburgensis (strain ATCC BAA-927 / DSM 2133 / JCM 14651 / NBRC 100331 / OCM 82 / Marburg) (Methanobacterium thermoautotrophicum)).